Here is a 690-residue protein sequence, read N- to C-terminus: Protein MODIFIED TRANSPORT TO THE VACUOLE 1 (690 aa).

Residues Val20–Gly150 form the VHS domain. Disordered regions lie at residues Asp228 to Val258 and Phe518 to Pro551. Positions Gly243–Arg257 are enriched in low complexity. Positions Ile520–Pro536 are enriched in polar residues.

Binds to clathrin heavy chain. Expressed in inflorescence stems, stigmas, roots, roots meristems, embryos, and floral and leaf vasculatures, but absent from the floral abscission zone.

Its subcellular location is the golgi apparatus. It localises to the trans-Golgi network. It is found in the cytoplasmic vesicle. The protein resides in the clathrin-coated vesicle. In terms of biological role, mediates clathrin-dependent trafficking of vacuolar cargo from the trans-Golgi network (TGN). Promotes plant growth. The sequence is that of Protein MODIFIED TRANSPORT TO THE VACUOLE 1 from Arabidopsis thaliana (Mouse-ear cress).